Reading from the N-terminus, the 372-residue chain is 2,7-anhydro-N-acetylneuraminate hydratase (372 aa).

NAD(+)-binding residues include tyrosine 11, phenylalanine 12, aspartate 33, asparagine 36, threonine 68, asparagine 70, histidine 73, glutamate 90, lysine 91, and tryptophan 160.

The protein belongs to the Gfo/Idh/MocA family. As to quaternary structure, homodimer. NAD(+) is required as a cofactor.

It catalyses the reaction N-acetyl-2,7-anhydro-alpha-neuraminate + H2O = N-acetyl-alpha-neuraminate. The catalysed reaction is 2-deoxy-2,3-dehydro-N-acetylneuraminate + H2O = N-acetyl-alpha-neuraminate. All conversions require NAD(+) as a cofactor, which is regenerated in the reaction. The presence of EGTA and several divalent cations does not affect the activity. Its function is as follows. Hydratase involved in the degradation of sialic acids. Catalyzes the reversible conversion of the dehydrated form of N-acetylneuraminate (Neu5Ac), 2,7-anhydro-N-acetylneuraminate (2,7-AN), to Neu5Ac. Also catalyzes the irreversible conversion of 2-deoxy-2,3-didehydro-N-acetylneuraminate (2,3-EN) to Neu5Ac. The reaction mechanism involves keto intermediates and the transient formation of NADH. The polypeptide is 2,7-anhydro-N-acetylneuraminate hydratase (Escherichia coli (strain K12)).